We begin with the raw amino-acid sequence, 130 residues long: Small ribosomal subunit protein uS11 (130 aa).

Belongs to the universal ribosomal protein uS11 family. Part of the 30S ribosomal subunit. Interacts with proteins S7 and S18. Binds to IF-3.

Located on the platform of the 30S subunit, it bridges several disparate RNA helices of the 16S rRNA. Forms part of the Shine-Dalgarno cleft in the 70S ribosome. This chain is Small ribosomal subunit protein uS11, found in Prochlorococcus marinus (strain MIT 9312).